The chain runs to 275 residues: Large ribosomal subunit protein uL2 (275 aa).

Positions Thr-36–Ile-49 are enriched in polar residues. Disordered regions lie at residues Thr-36–Lys-59 and Ala-224–Arg-275. A compositionally biased stretch (basic residues) spans Thr-50–Lys-59.

The protein belongs to the universal ribosomal protein uL2 family. Part of the 50S ribosomal subunit. Forms a bridge to the 30S subunit in the 70S ribosome.

Functionally, one of the primary rRNA binding proteins. Required for association of the 30S and 50S subunits to form the 70S ribosome, for tRNA binding and peptide bond formation. It has been suggested to have peptidyltransferase activity; this is somewhat controversial. Makes several contacts with the 16S rRNA in the 70S ribosome. The protein is Large ribosomal subunit protein uL2 of Burkholderia vietnamiensis (strain G4 / LMG 22486) (Burkholderia cepacia (strain R1808)).